The chain runs to 373 residues: Peroxisomal biogenesis factor 3 (373 aa).

Topologically, residues 1–15 are cytoplasmic; the sequence is MLRSVWNFLKRHKKK. The targeting to peroxisomes stretch occupies residues 1 to 45; it reads MLRSVWNFLKRHKKKCIFLGTVLGGVYILGKYGQKKIREIQEREA. Residues 16-36 traverse the membrane as a helical segment; the sequence is CIFLGTVLGGVYILGKYGQKK. Over 37 to 116 the chain is Peroxisomal; sequence IREIQEREAA…LKIISFTRST (80 aa). A helical transmembrane segment spans residues 117-140; sequence VAVYSTCMLVVLLRVQLNIIGGYI. The interaction with PEX19 stretch occupies residues 120–136; the sequence is YSTCMLVVLLRVQLNII. Residues 141–373 are Cytoplasmic-facing; sequence YLDNAAVGKN…AFSTPQQLEK (233 aa).

Belongs to the peroxin-3 family. In terms of assembly, interacts with PEX19. In terms of tissue distribution, found in all examined tissues.

The protein localises to the peroxisome membrane. In terms of biological role, involved in peroxisome biosynthesis and integrity. Assembles membrane vesicles before the matrix proteins are translocated. As a docking factor for PEX19, is necessary for the import of peroxisomal membrane proteins in the peroxisomes. This Homo sapiens (Human) protein is Peroxisomal biogenesis factor 3 (PEX3).